A 1020-amino-acid chain; its full sequence is Contactin-1 (1020 aa).

The first 20 residues, methionine 1–glycine 20, serve as a signal peptide directing secretion. 6 Ig-like C2-type domains span residues proline 41–serine 131, proline 137–phenylalanine 223, proline 241–tyrosine 326, proline 331–lysine 407, proline 413–valine 500, and proline 504–arginine 603. Cystine bridges form between cysteine 65–cysteine 114 and cysteine 158–cysteine 211. N-linked (GlcNAc...) asparagine glycosylation is found at asparagine 208 and asparagine 258. Cysteine 263 and cysteine 310 are joined by a disulfide. N-linked (GlcNAc...) asparagine glycosylation is present at asparagine 338. 2 disulfides stabilise this stretch: cysteine 352–cysteine 391 and cysteine 436–cysteine 484. N-linked (GlcNAc...) asparagine glycans are attached at residues asparagine 457, asparagine 473, asparagine 494, and asparagine 521. A disulfide bridge links cysteine 526 with cysteine 585. N-linked (GlcNAc...) asparagine glycosylation occurs at asparagine 593. 4 consecutive Fibronectin type-III domains span residues proline 608–alanine 706, alanine 711–aspartate 808, alanine 813–serine 908, and glutamine 909–serine 1002. Positions serine 695–glycine 719 are disordered. N-linked (GlcNAc...) asparagine glycosylation is present at asparagine 935. Residue serine 1001 is the site of GPI-anchor amidated serine attachment. A propeptide spans serine 1002–phenylalanine 1020 (removed in mature form).

The protein belongs to the immunoglobulin superfamily. Contactin family. In terms of assembly, monomer. Interacts with CNTNAP1 in cis form. Binds to the carbonic-anhydrase like domain of PTPRZ1. Interacts with NOTCH1 and TNR. Detected in a complex with NRCAM and PTPRB. Interacts with TASOR. In terms of tissue distribution, expressed in the ovary and in Sertoli cells of the testis.

The protein resides in the cell membrane. Contactins mediate cell surface interactions during nervous system development. Involved in the formation of paranodal axo-glial junctions in myelinated peripheral nerves and in the signaling between axons and myelinating glial cells via its association with CNTNAP1. Participates in oligodendrocytes generation by acting as a ligand of NOTCH1. Its association with NOTCH1 promotes NOTCH1 activation through the released notch intracellular domain (NICD) and subsequent translocation to the nucleus. Interaction with TNR induces a repulsion of neurons and an inhibition of neurite outgrowth. The protein is Contactin-1 (Cntn1) of Mus musculus (Mouse).